The sequence spans 2374 residues: Genome polyprotein (2374 aa).

G115 carries the N-myristoyl glycine; by host lipid modification. 2 disordered regions span residues 144-176 (GDMPTASTSEAPLGSNKGGSSTSPKSTSNGNVV) and 707-739 (GADGAEVQPAPTSDLSDGNPTTDPAPRDNFDYP). The span at 157–174 (GSNKGGSSTSPKSTSNGN) shows a compositional bias: low complexity. Polar residues predominate over residues 716–728 (APTSDLSDGNPTT). The 165-residue stretch at 1361–1525 (YSTALSAISL…VAFSAAAALQ (165 aa)) folds into the SF3 helicase domain. 1387 to 1394 (GPPGTGKS) provides a ligand contact to ATP. G1600 carries the N-myristoyl glycine; by host lipid modification. Residues 1649 to 1669 (IFAASSFLSLIAATLTIVRCL) traverse the membrane as a helical segment. Positions 1677–1699 (GAYSGTPVPKPRKKDLPKQPVYS) are disordered. Position 1679 is an O-(5'-phospho-RNA)-tyrosine (Y1679). Residues 1700–1889 (GPVRRQGFDP…FSARLTPERV (190 aa)) form the Peptidase C3 domain. Active-site for protease 3C activity residues include H1748, E1779, and C1852. The RdRp catalytic domain occupies 2126–2243 (SNVWSIDYSC…GSNQDFHPRE (118 aa)). Catalysis depends on for RdRp activity residues D2132 and D2229.

In terms of assembly, interacts with capsid protein VP1. Interacts with capsid protein VP3. Interacts with capsid protein VP0. Interacts with capsid protein VP3. As to quaternary structure, interacts with capsid protein VP0. Interacts with capsid protein VP1. In terms of assembly, homodimer. Interacts with protein 2B. Interacts with protein 2C. Homodimer. Interacts with host ABCD3. Interacts with protein 2A. Interacts with host ACBD3. As to quaternary structure, homodimer. Interacts with host ABCD3. Interacts with protein 2A. Interacts with protein 3A. Interacts with protein 3C. Interacts with host ACBD3. In terms of assembly, homodimer. Interacts with host ABCD3 (via GOLD domain) and PI4KB; these interactions allow the formation of a viral protein/ACBD3/PI4KB complex in order to synthesize PI4P at the viral RNA replication sites. Interacts with protein 2C. Interacts with protein 3C. Protein 3C: Interacts with protein 2A. Protein 3C: Interacts with protein 2C. Post-translationally, specific enzymatic cleavages by the viral protease in vivo yield a variety of precursors and mature proteins. The leader protein-VP0 junction is cleaved by 3C proteinase. The VP1/2A junction is cleaved by the protein 3CD in association with protein 2A. In terms of processing, uridylylated by the polymerase and is covalently linked to the 5'-end of genomic RNA. This uridylylated form acts as a nucleotide-peptide primer for the polymerase.

It is found in the virion. It localises to the host cytoplasm. Its subcellular location is the host cytoplasmic vesicle membrane. The protein resides in the host Golgi apparatus membrane. The catalysed reaction is Selective cleavage of Gln-|-Gly bond in the poliovirus polyprotein. In other picornavirus reactions Glu may be substituted for Gln, and Ser or Thr for Gly.. It carries out the reaction RNA(n) + a ribonucleoside 5'-triphosphate = RNA(n+1) + diphosphate. It catalyses the reaction ATP + H2O = ADP + phosphate + H(+). Its function is as follows. Required for viral RNA replication and viral RNA encapsidation. Does not have any proteolytic activity. Functionally, forms an icosahedral capsid of pseudo T=3 symmetry with capsid proteins VP0 and VP3. Together they form an icosahedral capsid composed of 60 copies of each VP0, VP1, and VP3. All the three latter proteins contain a beta-sheet structure called beta-barrel jelly roll. In terms of biological role, forms an icosahedral capsid of pseudo T=3 symmetry with capsid proteins VP1 and VP3. Together they form an icosahedral capsid composed of 60 copies of each VP0, VP1, and VP3. All the three latter proteins contain a beta-sheet structure called beta-barrel jelly roll. Forms an icosahedral capsid of pseudo T=3 symmetry with capsid proteins VP0 and VP1. Together they form an icosahedral capsid composed of 60 copies of each VP0, VP1, and VP3. All the three latter proteins contain a beta-sheet structure called beta-barrel jelly roll. Its function is as follows. Required for viral RNA replication. Does not have any proteolytic activity. Functionally, affects membrane integrity and causes an increase in membrane permeability. In terms of biological role, induces and associates with structural rearrangements of intracellular membranes. Displays RNA-binding, nucleotide binding and NTPase activities. May play a role in virion morphogenesis and viral RNA encapsidation by interacting with the capsid protein VP3. Serves as membrane anchor via its hydrophobic domain. Plays an essential role in viral RNA replication by recruiting PI4KB at the viral replication sites, thereby allowing the formation of rearranged membranous structures where viral replication takes place. Its function is as follows. Forms a primer, VPg-pU, which is utilized by the polymerase for the initiation of RNA chains. Functionally, cysteine protease that generates mature viral proteins from the precursor polyprotein. In addition to its proteolytic activity, it binds to viral RNA, and thus influences viral genome replication. RNA and substrate cooperatively bind to the protease. In terms of biological role, replicates the genomic and antigenomic RNAs by recognizing replications specific signals. Performs VPg uridylylation. This chain is Genome polyprotein, found in Salivirus A (isolate Human/Nigeria/NG-J1/2007) (SV-A).